Reading from the N-terminus, the 405-residue chain is Tyrosine--tRNA ligase (405 aa).

A 'HIGH' region motif is present at residues P48–H57. The 'KMSKS' region motif lies at K232–S236. K235 provides a ligand contact to ATP. One can recognise an S4 RNA-binding domain in the interval I343–F404.

It belongs to the class-I aminoacyl-tRNA synthetase family. TyrS type 2 subfamily. As to quaternary structure, homodimer.

It is found in the cytoplasm. It carries out the reaction tRNA(Tyr) + L-tyrosine + ATP = L-tyrosyl-tRNA(Tyr) + AMP + diphosphate + H(+). Its function is as follows. Catalyzes the attachment of tyrosine to tRNA(Tyr) in a two-step reaction: tyrosine is first activated by ATP to form Tyr-AMP and then transferred to the acceptor end of tRNA(Tyr). The polypeptide is Tyrosine--tRNA ligase (Desulfotalea psychrophila (strain LSv54 / DSM 12343)).